Reading from the N-terminus, the 103-residue chain is Methane monooxygenase component D (103 aa).

In terms of assembly, the soluble methane monooxygenase (sMMO) consists of four components A/MMOH (composed of alpha/MmoX, beta/MmoY and gamma/MmoZ), B/MMOB (MmoB), C/MMOR (MmoC) and D/MMOD (MmoD).

The polypeptide is Methane monooxygenase component D (mmoD) (Methylococcus capsulatus (strain ATCC 33009 / NCIMB 11132 / Bath)).